Consider the following 171-residue polypeptide: Peptide methionine sulfoxide reductase MsrA (171 aa).

Cys13 is an active-site residue.

This sequence belongs to the MsrA Met sulfoxide reductase family.

It catalyses the reaction L-methionyl-[protein] + [thioredoxin]-disulfide + H2O = L-methionyl-(S)-S-oxide-[protein] + [thioredoxin]-dithiol. It carries out the reaction [thioredoxin]-disulfide + L-methionine + H2O = L-methionine (S)-S-oxide + [thioredoxin]-dithiol. Functionally, has an important function as a repair enzyme for proteins that have been inactivated by oxidation. Catalyzes the reversible oxidation-reduction of methionine sulfoxide in proteins to methionine. This Mycolicibacterium paratuberculosis (strain ATCC BAA-968 / K-10) (Mycobacterium paratuberculosis) protein is Peptide methionine sulfoxide reductase MsrA.